A 345-amino-acid chain; its full sequence is L-threonine 3-dehydrogenase (345 aa).

Cys-42 contacts Zn(2+). Active-site charge relay system residues include Thr-44 and His-47. 6 residues coordinate Zn(2+): His-67, Glu-68, Cys-97, Cys-100, Cys-103, and Cys-111. NAD(+) contacts are provided by residues Ile-179, Asp-199, Arg-204, 266-268 (LGI), and 290-291 (IY).

This sequence belongs to the zinc-containing alcohol dehydrogenase family. As to quaternary structure, homotetramer. Requires Zn(2+) as cofactor.

Its subcellular location is the cytoplasm. It carries out the reaction L-threonine + NAD(+) = (2S)-2-amino-3-oxobutanoate + NADH + H(+). It functions in the pathway amino-acid degradation; L-threonine degradation via oxydo-reductase pathway; glycine from L-threonine: step 1/2. Its function is as follows. Catalyzes the NAD(+)-dependent oxidation of L-threonine to 2-amino-3-ketobutyrate. This chain is L-threonine 3-dehydrogenase, found in Rhizobium etli (strain CIAT 652).